The sequence spans 545 residues: Chaperonin GroEL (545 aa).

ATP contacts are provided by residues 29 to 32, Lys50, 86 to 90, Gly413, and Asp495; these read TLGP and DGTTT.

The protein belongs to the chaperonin (HSP60) family. Forms a cylinder of 14 subunits composed of two heptameric rings stacked back-to-back. Interacts with the co-chaperonin GroES.

The protein resides in the cytoplasm. The catalysed reaction is ATP + H2O + a folded polypeptide = ADP + phosphate + an unfolded polypeptide.. Its function is as follows. Together with its co-chaperonin GroES, plays an essential role in assisting protein folding. The GroEL-GroES system forms a nano-cage that allows encapsulation of the non-native substrate proteins and provides a physical environment optimized to promote and accelerate protein folding. This is Chaperonin GroEL from Borreliella afzelii (strain PKo) (Borrelia afzelii).